The primary structure comprises 292 residues: Cytochrome c1, heme protein, mitochondrial (292 aa).

A mitochondrion-targeting transit peptide spans 1-46 (MFRSFSTAAKQAVKGTYVQRAIVGGAAVVGIGASTMLYADSLTADA). At 47-253 (MTAAEHGLHA…SEPEHDERKR (207 aa)) the chain is on the mitochondrial intermembrane side. Positions 73–226 (SSIRRGYQVY…DLVEYEDGTP (154 aa)) constitute a Cytochrome c domain. Residues cysteine 86, cysteine 89, and histidine 90 each coordinate heme c. The segment at 117-137 (FEYDDEPDDQGNPKKRPGKLA) is disordered. Methionine 210 contacts heme c. A helical membrane pass occupies residues 254–272 (LGLKAMIVLSSLYLLSVWV). Residues 273 to 292 (KKFKWASIKSRKIVFNPPKK) are Mitochondrial matrix-facing.

It belongs to the cytochrome c family. As to quaternary structure, component of the ubiquinol-cytochrome c oxidoreductase (cytochrome b-c1 complex, complex III, CIII), a multisubunit enzyme composed of 3 respiratory subunits cytochrome b, cytochrome c1 and Rieske protein, 2 core protein subunits, and additional low-molecular weight protein subunits. The complex exists as an obligatory dimer and forms supercomplexes (SCs) in the inner mitochondrial membrane with cytochrome c oxidase (complex IV, CIV). Heme c serves as cofactor.

It is found in the mitochondrion inner membrane. The enzyme catalyses a quinol + 2 Fe(III)-[cytochrome c](out) = a quinone + 2 Fe(II)-[cytochrome c](out) + 2 H(+)(out). Component of the ubiquinol-cytochrome c oxidoreductase, a multisubunit transmembrane complex that is part of the mitochondrial electron transport chain which drives oxidative phosphorylation. The respiratory chain contains 3 multisubunit complexes succinate dehydrogenase (complex II, CII), ubiquinol-cytochrome c oxidoreductase (cytochrome b-c1 complex, complex III, CIII) and cytochrome c oxidase (complex IV, CIV), that cooperate to transfer electrons derived from NADH and succinate to molecular oxygen, creating an electrochemical gradient over the inner membrane that drives transmembrane transport and the ATP synthase. The cytochrome b-c1 complex catalyzes electron transfer from ubiquinol to cytochrome c, linking this redox reaction to translocation of protons across the mitochondrial inner membrane, with protons being carried across the membrane as hydrogens on the quinol. In the process called Q cycle, 2 protons are consumed from the matrix, 4 protons are released into the intermembrane space and 2 electrons are passed to cytochrome c. Cytochrome c1 is a catalytic core subunit containing a c-type heme. It transfers electrons from the [2Fe-2S] iron-sulfur cluster of the Rieske protein to cytochrome c. The chain is Cytochrome c1, heme protein, mitochondrial (CYT1) from Kluyveromyces lactis (strain ATCC 8585 / CBS 2359 / DSM 70799 / NBRC 1267 / NRRL Y-1140 / WM37) (Yeast).